The sequence spans 73 residues: UPF0235 protein LA_1736 (73 aa).

The protein belongs to the UPF0235 family.

The polypeptide is UPF0235 protein LA_1736 (Leptospira interrogans serogroup Icterohaemorrhagiae serovar Lai (strain 56601)).